A 435-amino-acid polypeptide reads, in one-letter code: 3-phosphoshikimate 1-carboxyvinyltransferase (435 aa).

3-phosphoshikimate-binding residues include Lys-23, Ser-24, and Arg-28. Residue Lys-23 coordinates phosphoenolpyruvate. Phosphoenolpyruvate is bound by residues Gly-97 and Arg-125. The 3-phosphoshikimate site is built by Ser-170, Ser-171, Gln-172, Ser-198, Asp-314, Asn-338, and Lys-342. Gln-172 is a binding site for phosphoenolpyruvate. Catalysis depends on Asp-314, which acts as the Proton acceptor. Phosphoenolpyruvate-binding residues include Arg-346, Arg-388, and Lys-413.

The protein belongs to the EPSP synthase family. In terms of assembly, monomer.

The protein localises to the cytoplasm. The catalysed reaction is 3-phosphoshikimate + phosphoenolpyruvate = 5-O-(1-carboxyvinyl)-3-phosphoshikimate + phosphate. The protein operates within metabolic intermediate biosynthesis; chorismate biosynthesis; chorismate from D-erythrose 4-phosphate and phosphoenolpyruvate: step 6/7. Functionally, catalyzes the transfer of the enolpyruvyl moiety of phosphoenolpyruvate (PEP) to the 5-hydroxyl of shikimate-3-phosphate (S3P) to produce enolpyruvyl shikimate-3-phosphate and inorganic phosphate. The protein is 3-phosphoshikimate 1-carboxyvinyltransferase of Sodalis glossinidius (strain morsitans).